The chain runs to 332 residues: Tryptophan--tRNA ligase (332 aa).

ATP is bound by residues 11–13 and 19–20; these read TST and GN. Positions 12–20 match the 'HIGH' region motif; the sequence is STGKLTLGN. Residue aspartate 140 participates in L-tryptophan binding. ATP-binding positions include 152-154, isoleucine 191, and 200-204; these read GQD and KMSKS. The short motif at 200 to 204 is the 'KMSKS' region element; the sequence is KMSKS.

Belongs to the class-I aminoacyl-tRNA synthetase family. Homodimer.

Its subcellular location is the cytoplasm. The enzyme catalyses tRNA(Trp) + L-tryptophan + ATP = L-tryptophyl-tRNA(Trp) + AMP + diphosphate + H(+). In terms of biological role, catalyzes the attachment of tryptophan to tRNA(Trp). This chain is Tryptophan--tRNA ligase, found in Mycoplasmopsis pulmonis (strain UAB CTIP) (Mycoplasma pulmonis).